Reading from the N-terminus, the 421-residue chain is Peptide chain release factor subunit 1 (421 aa).

The protein belongs to the eukaryotic release factor 1 family. Heterodimer of two subunits, one of which binds GTP.

It is found in the cytoplasm. Its function is as follows. Directs the termination of nascent peptide synthesis (translation) in response to the termination codons UAA, UAG and UGA. The protein is Peptide chain release factor subunit 1 (prf1) of Methanocaldococcus jannaschii (strain ATCC 43067 / DSM 2661 / JAL-1 / JCM 10045 / NBRC 100440) (Methanococcus jannaschii).